A 575-amino-acid polypeptide reads, in one-letter code: MLAHLNQVTRIPPCPPFSGREARLKFHFFSWSTFMLSWPNNATLREIRTRAATNLTHHPHLVDTLYHASPQTPFLTRSGALYRFVTCCNCTLPNISIQQCKAGDRPGDLEIILQSNGGGRPASFQFPSSPTGSLLRCIVAASLLPEVSVGHQELSPLRSRSQGGQTDVRSGPDPARRLVALLRREDGAPKDPPLGPFGHPRGPGPAKSEDEESERRDAPPPPLDSSFQASRLVPVGPGFRLLVFNTNRVINTKLVCSEPLVKMRVCNVPRLINNFVARKYVVKETAFTVSLFFTDGVGANLAINVNISGTYLSFLLAMTSLRCFLPVEAIYPAAVSNWNSTLDLHGLENQSLVRENRSGVFWTTNFPSVVSCRDGLNVSWFKAATATISRVHGQTLEQHLIREITPIVTHREAKISRIKNRLFTLLELRNRSQIQVLHKRFLEGLLDCASLLRLDPSCINRIASEGLFDFSKRSIAHSKNRHECALLGHRHSANVTKLVVNERKTRLDILGRNANFLTRCKHQVNLRQSPIFLTLLRHIRRRLGLGRASVKREITLLLAHLRKKTAPIHCRDAQV.

2 disordered regions span residues 153–174 (ELSP…GPDP) and 186–228 (DGAP…SSFQ). Polar residues predominate over residues 158-168 (RSRSQGGQTDV).

This sequence belongs to the herpesviridae UL87 family.

DNA-binding protein that is required for viral late gene expression. Selectively recognizes late promoters by binding to a non-canonical TATA box element (TATT). Part of the viral pre-initiation complex (vPIC) that is responsible for the expression of vPIC-dependent late genes. vPIC is composed of at least BcRF1 that binds the viral TATT box, BDLF3.5, BDLF4, BFRF2, BGLF3, BGLF4 and BVLF1. In Homo sapiens (Human), this protein is Late gene expression regulator BcRF1.